The sequence spans 338 residues: Cytochrome c biogenesis protein CcsA (338 aa).

8 helical membrane-spanning segments follow: residues 11-31, 39-59, 76-96, 100-120, 145-165, 244-264, 278-295, and 305-325; these read VLLD…YWLA, LLHE…TGLL, ESLF…EAFA, LVGV…SLTL, VMIL…AFLI, LIGL…VWAN, TWSL…HARI, and ATLA…VNFL.

Belongs to the CcmF/CycK/Ccl1/NrfE/CcsA family. As to quaternary structure, may interact with ccs1.

It localises to the cell inner membrane. In terms of biological role, required during biogenesis of c-type cytochromes (cytochrome c6 and cytochrome f) at the step of heme attachment. In Gloeobacter violaceus (strain ATCC 29082 / PCC 7421), this protein is Cytochrome c biogenesis protein CcsA.